We begin with the raw amino-acid sequence, 461 residues long: tRNA modification GTPase MnmE (461 aa).

3 residues coordinate (6S)-5-formyl-5,6,7,8-tetrahydrofolate: arginine 23, glutamate 88, and arginine 127. Positions 223–382 (GLNTVIVGKP…VEEALVEIVY (160 aa)) constitute a TrmE-type G domain. Asparagine 233 provides a ligand contact to K(+). GTP is bound by residues 233–238 (NVGKSS), 252–258 (TEVPGTT), and 277–280 (DTAG). Serine 237 serves as a coordination point for Mg(2+). Threonine 252, valine 254, and threonine 257 together coordinate K(+). Position 258 (threonine 258) interacts with Mg(2+). Residue lysine 461 coordinates (6S)-5-formyl-5,6,7,8-tetrahydrofolate.

The protein belongs to the TRAFAC class TrmE-Era-EngA-EngB-Septin-like GTPase superfamily. TrmE GTPase family. As to quaternary structure, homodimer. Heterotetramer of two MnmE and two MnmG subunits. Requires K(+) as cofactor.

It localises to the cytoplasm. In terms of biological role, exhibits a very high intrinsic GTPase hydrolysis rate. Involved in the addition of a carboxymethylaminomethyl (cmnm) group at the wobble position (U34) of certain tRNAs, forming tRNA-cmnm(5)s(2)U34. The sequence is that of tRNA modification GTPase MnmE from Alkaliphilus metalliredigens (strain QYMF).